A 212-amino-acid chain; its full sequence is 3-isopropylmalate dehydratase small subunit (212 aa).

Belongs to the LeuD family. LeuD type 1 subfamily. In terms of assembly, heterodimer of LeuC and LeuD.

It catalyses the reaction (2R,3S)-3-isopropylmalate = (2S)-2-isopropylmalate. Its pathway is amino-acid biosynthesis; L-leucine biosynthesis; L-leucine from 3-methyl-2-oxobutanoate: step 2/4. Its function is as follows. Catalyzes the isomerization between 2-isopropylmalate and 3-isopropylmalate, via the formation of 2-isopropylmaleate. This Pseudomonas aeruginosa (strain UCBPP-PA14) protein is 3-isopropylmalate dehydratase small subunit.